A 267-amino-acid chain; its full sequence is Indole-3-glycerol phosphate synthase (267 aa).

It belongs to the TrpC family.

It catalyses the reaction 1-(2-carboxyphenylamino)-1-deoxy-D-ribulose 5-phosphate + H(+) = (1S,2R)-1-C-(indol-3-yl)glycerol 3-phosphate + CO2 + H2O. Its pathway is amino-acid biosynthesis; L-tryptophan biosynthesis; L-tryptophan from chorismate: step 4/5. This Verminephrobacter eiseniae (strain EF01-2) protein is Indole-3-glycerol phosphate synthase.